The following is a 706-amino-acid chain: Choline transporter-like protein 2 (706 aa).

Over 1 to 33 (MGDERPHYYGKHGTPQKYDPTFKGPIYNRGCTD) the chain is Cytoplasmic. T14 carries the post-translational modification Phosphothreonine. Residues 34-54 (IICCVFLLLAIVGYVAVGIIA) traverse the membrane as a helical segment. Topologically, residues 55 to 232 (WTHGDPRKVI…RIFEDYTVSW (178 aa)) are extracellular. N187 and N200 each carry an N-linked (GlcNAc...) asparagine glycan. Residues 233–253 (YWIIIGLVIAMAMSLLFIILL) traverse the membrane as a helical segment. At 254–256 (RFL) the chain is on the cytoplasmic side. A helical transmembrane segment spans residues 257–277 (AGIMVWVMIIMVILVLGYGIF). The Extracellular segment spans residues 278-315 (HCYMEYSRLRGEAGSDVSLVDLGFQTDFRVYLHLRQTW). A helical transmembrane segment spans residues 316–336 (LAFMIILSILEVIIILLLIFL). Residues 337-364 (RKRILIAIALIKEASRAVGYVMCSLLYP) lie on the Cytoplasmic side of the membrane. Residues 365-385 (LVTFFLLCLCIAYWASTAVFL) traverse the membrane as a helical segment. Residues 386–457 (STSNEAVYKI…FNAFMFFWLA (72 aa)) are Extracellular-facing. The N-linked (GlcNAc...) asparagine glycan is linked to N417. Residues 458-480 (NFVLALGQVTLAGAFASYYWALR) traverse the membrane as a helical segment. At 481-504 (KPDDLPAFPLFSAFGRALRYHTGS) the chain is on the cytoplasmic side. Residues 505 to 525 (LAFGALILAIVQIIRVILEYL) form a helical membrane-spanning segment. Topologically, residues 526–563 (DQRLKAAENKFAKCLMTCLKCCFWCLEKFIKFLNRNAY) are extracellular. Residues 564-584 (IMIAIYGTNFCTSARNAFFLL) form a helical membrane-spanning segment. Residues 585 to 599 (MRNIIRVAVLDKVTD) lie on the Cytoplasmic side of the membrane. The chain crosses the membrane as a helical span at residues 600 to 620 (FLFLLGKLLIVGSVGILAFFF). Topologically, residues 621 to 638 (FTHRIRIVQDTAPPLNYY) are extracellular. Residues 639 to 659 (WVPILTVIVGSYLIAHGFFSV) traverse the membrane as a helical segment. Residues 660–706 (YGMCVDTLFLCFLEDLERNDGSAERPYFMSSTLKKLLNKTNKKAAES) lie on the Cytoplasmic side of the membrane.

Belongs to the CTL (choline transporter-like) family. As to quaternary structure, interacts with COCH. Present in supporting cells of the inner ear (at protein level). As to expression, expressed in inner ear vestibular tissue.

It localises to the cell membrane. The protein localises to the mitochondrion outer membrane. The enzyme catalyses choline(out) + n H(+)(in) = choline(in) + n H(+)(out). It catalyses the reaction ethanolamine(out) + n H(+)(in) = ethanolamine(in) + n H(+)(out). Functionally, choline/H+ antiporter, mainly in mitochodria. Also acts as a low-affinity ethanolamine/H+ antiporter, regulating the supply of extracellular ethanolamine (Etn) for the CDP-Etn pathway, redistribute intracellular Etn and balance the CDP-Cho and CDP-Etn arms of the Kennedy pathway. Its function is as follows. Does not exhibit choline transporter activity. This is Choline transporter-like protein 2 from Homo sapiens (Human).